We begin with the raw amino-acid sequence, 345 residues long: Probable dual-specificity RNA methyltransferase RlmN (345 aa).

Glutamate 90 serves as the catalytic Proton acceptor. The Radical SAM core domain maps to 96–327 (QSYGNSVCVT…CIVRREFGHD (232 aa)). A disulfide bridge links cysteine 103 with cysteine 332. Positions 110, 114, and 117 each coordinate [4Fe-4S] cluster. Residues 160–161 (GE), serine 192, 215–217 (SLH), and asparagine 291 contribute to the S-adenosyl-L-methionine site. Cysteine 332 acts as the S-methylcysteine intermediate in catalysis.

Belongs to the radical SAM superfamily. RlmN family. [4Fe-4S] cluster serves as cofactor.

It is found in the cytoplasm. The enzyme catalyses adenosine(2503) in 23S rRNA + 2 reduced [2Fe-2S]-[ferredoxin] + 2 S-adenosyl-L-methionine = 2-methyladenosine(2503) in 23S rRNA + 5'-deoxyadenosine + L-methionine + 2 oxidized [2Fe-2S]-[ferredoxin] + S-adenosyl-L-homocysteine. The catalysed reaction is adenosine(37) in tRNA + 2 reduced [2Fe-2S]-[ferredoxin] + 2 S-adenosyl-L-methionine = 2-methyladenosine(37) in tRNA + 5'-deoxyadenosine + L-methionine + 2 oxidized [2Fe-2S]-[ferredoxin] + S-adenosyl-L-homocysteine. Functionally, specifically methylates position 2 of adenine 2503 in 23S rRNA and position 2 of adenine 37 in tRNAs. This is Probable dual-specificity RNA methyltransferase RlmN from Spiroplasma citri.